The primary structure comprises 44 residues: Cytochrome b559 subunit beta (44 aa).

A helical transmembrane segment spans residues 19 to 35; that stretch reads WLSVHALAVPTVFFIGA. Histidine 23 contacts heme.

It belongs to the PsbE/PsbF family. Heterodimer of an alpha subunit and a beta subunit. PSII is composed of 1 copy each of membrane proteins PsbA, PsbB, PsbC, PsbD, PsbE, PsbF, PsbH, PsbI, PsbJ, PsbK, PsbL, PsbM, PsbT, PsbX, PsbY, PsbZ, Psb30/Ycf12, peripheral proteins PsbO, CyanoQ (PsbQ), PsbU, PsbV and a large number of cofactors. It forms dimeric complexes. It depends on heme b as a cofactor.

The protein localises to the cellular thylakoid membrane. Functionally, this b-type cytochrome is tightly associated with the reaction center of photosystem II (PSII). PSII is a light-driven water:plastoquinone oxidoreductase that uses light energy to abstract electrons from H(2)O, generating O(2) and a proton gradient subsequently used for ATP formation. It consists of a core antenna complex that captures photons, and an electron transfer chain that converts photonic excitation into a charge separation. The polypeptide is Cytochrome b559 subunit beta (Rippkaea orientalis (strain PCC 8801 / RF-1) (Cyanothece sp. (strain PCC 8801))).